Here is a 716-residue protein sequence, read N- to C-terminus: Exocyst complex component 8 (716 aa).

At serine 15 the chain carries Phosphoserine. The disordered stretch occupies residues 129-150 (GFLPGPAGVPREGSGTGEEGKQ). The PH domain maps to 173-273 (YLVYNGDLVE…WLEVLEETKR (101 aa)). Basic and acidic residues predominate over residues 275–284 (LSDKRRREQE). A disordered region spans residues 275-319 (LSDKRRREQEEAAAPRAPPPVTSKGSNPFEDEDDEELATPEAEEE). Acidic residues predominate over residues 303–319 (FEDEDDEELATPEAEEE). A Phosphothreonine modification is found at threonine 313.

Belongs to the EXO84 family. The exocyst complex is composed of EXOC1, EXOC2, EXOC3, EXOC4, EXOC5, EXOC6, EXOC7 and EXOC8. Interacts (via PH domain) with GTP-bound RALA and RALB. Interacts with SH3BP1; required for the localization of both SH3BP1 and the exocyst to the leading edge of migrating cells.

It is found in the cytoplasm. It localises to the perinuclear region. The protein localises to the cell projection. Its subcellular location is the growth cone. Its function is as follows. Component of the exocyst complex involved in the docking of exocytic vesicles with fusion sites on the plasma membrane. The polypeptide is Exocyst complex component 8 (Exoc8) (Mus musculus (Mouse)).